The chain runs to 252 residues: ATP synthase subunit a (252 aa).

Transmembrane regions (helical) follow at residues 29 to 49 (FTNV…FLFI), 87 to 107 (FFPL…IGLF), 117 to 137 (IMIT…YGFY), 146 to 166 (LFVP…IEII), 196 to 216 (FIVS…LPLI), and 219 to 239 (VAIT…FTVL).

This sequence belongs to the ATPase A chain family. In terms of assembly, F-type ATPases have 2 components, CF(1) - the catalytic core - and CF(0) - the membrane proton channel. CF(1) has five subunits: alpha(3), beta(3), gamma(1), delta(1), epsilon(1). CF(0) has three main subunits: a(1), b(2) and c(9-12). The alpha and beta chains form an alternating ring which encloses part of the gamma chain. CF(1) is attached to CF(0) by a central stalk formed by the gamma and epsilon chains, while a peripheral stalk is formed by the delta and b chains.

The protein localises to the cell inner membrane. Its function is as follows. Key component of the proton channel; it plays a direct role in the translocation of protons across the membrane. In Bartonella tribocorum (strain CIP 105476 / IBS 506), this protein is ATP synthase subunit a.